The primary structure comprises 346 residues: Holliday junction branch migration complex subunit RuvB (346 aa).

A compositionally biased stretch (polar residues) spans 1–11 (MTEQRTIASSA). Positions 1-20 (MTEQRTIASSATREDEAADA) are disordered. Residues 1–183 (MTEQRTIASS…FGIVQRLEFY (183 aa)) form a large ATPase domain (RuvB-L) region. ATP is bound by residues isoleucine 22, arginine 23, glycine 64, lysine 67, threonine 68, threonine 69, 130–132 (EDF), arginine 173, tyrosine 183, and arginine 220. Threonine 68 is a Mg(2+) binding site. The small ATPAse domain (RuvB-S) stretch occupies residues 184-254 (SPQELTRIVI…VAQAAMQMLK (71 aa)). The interval 257 to 346 (PEGFDELDRR…PAIGEPGDLF (90 aa)) is head domain (RuvB-H). Positions 293, 312, and 317 each coordinate DNA.

It belongs to the RuvB family. Homohexamer. Forms an RuvA(8)-RuvB(12)-Holliday junction (HJ) complex. HJ DNA is sandwiched between 2 RuvA tetramers; dsDNA enters through RuvA and exits via RuvB. An RuvB hexamer assembles on each DNA strand where it exits the tetramer. Each RuvB hexamer is contacted by two RuvA subunits (via domain III) on 2 adjacent RuvB subunits; this complex drives branch migration. In the full resolvosome a probable DNA-RuvA(4)-RuvB(12)-RuvC(2) complex forms which resolves the HJ.

It is found in the cytoplasm. It catalyses the reaction ATP + H2O = ADP + phosphate + H(+). In terms of biological role, the RuvA-RuvB-RuvC complex processes Holliday junction (HJ) DNA during genetic recombination and DNA repair, while the RuvA-RuvB complex plays an important role in the rescue of blocked DNA replication forks via replication fork reversal (RFR). RuvA specifically binds to HJ cruciform DNA, conferring on it an open structure. The RuvB hexamer acts as an ATP-dependent pump, pulling dsDNA into and through the RuvAB complex. RuvB forms 2 homohexamers on either side of HJ DNA bound by 1 or 2 RuvA tetramers; 4 subunits per hexamer contact DNA at a time. Coordinated motions by a converter formed by DNA-disengaged RuvB subunits stimulates ATP hydrolysis and nucleotide exchange. Immobilization of the converter enables RuvB to convert the ATP-contained energy into a lever motion, pulling 2 nucleotides of DNA out of the RuvA tetramer per ATP hydrolyzed, thus driving DNA branch migration. The RuvB motors rotate together with the DNA substrate, which together with the progressing nucleotide cycle form the mechanistic basis for DNA recombination by continuous HJ branch migration. Branch migration allows RuvC to scan DNA until it finds its consensus sequence, where it cleaves and resolves cruciform DNA. This Xanthomonas campestris pv. campestris (strain B100) protein is Holliday junction branch migration complex subunit RuvB.